The primary structure comprises 258 residues: Indole-3-glycerol phosphate synthase (258 aa).

The protein belongs to the TrpC family.

The catalysed reaction is 1-(2-carboxyphenylamino)-1-deoxy-D-ribulose 5-phosphate + H(+) = (1S,2R)-1-C-(indol-3-yl)glycerol 3-phosphate + CO2 + H2O. It functions in the pathway amino-acid biosynthesis; L-tryptophan biosynthesis; L-tryptophan from chorismate: step 4/5. This chain is Indole-3-glycerol phosphate synthase, found in Campylobacter jejuni (strain RM1221).